The following is a 345-amino-acid chain: Phosphoribosylformylglycinamidine cyclo-ligase (345 aa).

This sequence belongs to the AIR synthase family.

It is found in the cytoplasm. It carries out the reaction 2-formamido-N(1)-(5-O-phospho-beta-D-ribosyl)acetamidine + ATP = 5-amino-1-(5-phospho-beta-D-ribosyl)imidazole + ADP + phosphate + H(+). Its pathway is purine metabolism; IMP biosynthesis via de novo pathway; 5-amino-1-(5-phospho-D-ribosyl)imidazole from N(2)-formyl-N(1)-(5-phospho-D-ribosyl)glycinamide: step 2/2. The protein is Phosphoribosylformylglycinamidine cyclo-ligase of Escherichia coli O7:K1 (strain IAI39 / ExPEC).